Here is a 1263-residue protein sequence, read N- to C-terminus: Multidrug resistance protein sirA (1263 aa).

A disordered region spans residues 1–21 (MAEPESEKPSSAQGGGLPSSD). Helical transmembrane passes span 57–77 (LISAFFAAVSGAMFPLLILFI), 104–124 (IALYIVYLFLGQLVSVFIFTN), 179–199 (KIGLFVSACSCFVASYAIGFV), and 206–226 (FILTSTVVAITGVMIIMSGFM). An ABC transmembrane type-1 1 domain is found at 57-347 (LISAFFAAVS…VGPHLQAMSL (291 aa)). Residue Asn232 is glycosylated (N-linked (GlcNAc...) asparagine). 2 helical membrane passes run 284-304 (VMGWMLAIMYGLIFLNYGLAI) and 318-338 (VGAIITVLMCLNIGAFLFGNV). In terms of domain architecture, ABC transporter 1 spans 380 to 625 (IEFRNVSHVY…EGLYQTFVRR (246 aa)). Asn384 is a glycosylation site (N-linked (GlcNAc...) asparagine). ATP is bound at residue 415–422 (GASGSGKS). Asn469 carries N-linked (GlcNAc...) asparagine glycosylation. A disordered region spans residues 635-672 (PPHARITPAVDTPASPQHRLSEKTGSIYGQGESEAADK). The next 6 membrane-spanning stretches (helical) occupy residues 699 to 719 (VTGIASAVISGAVWPAHSVFF), 740 to 760 (FWAAMYVMLAFVQIASQGVQG), 817 to 839 (VFLGTLFSATATVLGGLILSLAV), 843 to 865 (LTLVTMGTIPIIIVAGYVRLKLV), 930 to 950 (LSEAVPLGCMSLGFWYGATLV), and 960 to 980 (FFIVVTAVIFGASSAGLVFAF). Residues 699 to 986 (VTGIASAVIS…VFAFAPDFGK (288 aa)) form the ABC transmembrane type-1 2 domain. Positions 1021-1259 (VDVSNVVFYY…RGSYYDSVNL (239 aa)) constitute an ABC transporter 2 domain. Residue 1056 to 1063 (GGSGSGKS) coordinates ATP.

This sequence belongs to the ABC transporter superfamily. ABCB family. Multidrug resistance exporter (TC 3.A.1.201) subfamily.

Its subcellular location is the cell membrane. It catalyses the reaction ATP + H2O + xenobioticSide 1 = ADP + phosphate + xenobioticSide 2.. Functionally, sirodesmin transporter that provides the dual role of sirodesmin export and self-protection. Also provides tolerance to gliotoxin. This chain is Multidrug resistance protein sirA, found in Leptosphaeria maculans (Blackleg fungus).